The primary structure comprises 478 residues: Multidrug resistance outer membrane protein MdtQ (478 aa).

The first 21 residues, 1–21 (MNRDSFYPAIACFPLLLMLAG), serve as a signal peptide directing secretion. Cys22 is lipidated: N-palmitoyl cysteine. Cys22 carries S-diacylglycerol cysteine lipidation.

Belongs to the outer membrane factor (OMF) (TC 1.B.17) family.

The protein resides in the cell outer membrane. Could be involved in resistance to puromycin, acriflavine and tetraphenylarsonium chloride. The sequence is that of Multidrug resistance outer membrane protein MdtQ (mdtQ) from Escherichia coli O6:H1 (strain CFT073 / ATCC 700928 / UPEC).